The primary structure comprises 464 residues: Asparagine--tRNA ligase (464 aa).

The protein belongs to the class-II aminoacyl-tRNA synthetase family. In terms of assembly, homodimer.

The protein resides in the cytoplasm. It carries out the reaction tRNA(Asn) + L-asparagine + ATP = L-asparaginyl-tRNA(Asn) + AMP + diphosphate + H(+). This is Asparagine--tRNA ligase from Xanthomonas campestris pv. campestris (strain 8004).